The following is a 242-amino-acid chain: uncharacterized protein (242 aa).

Belongs to the MtxX family.

This is an uncharacterized protein from Methanothermobacter thermautotrophicus (strain ATCC 29096 / DSM 1053 / JCM 10044 / NBRC 100330 / Delta H) (Methanobacterium thermoautotrophicum).